Reading from the N-terminus, the 372-residue chain is N-acetylneuraminate-9-phosphate synthase (372 aa).

The region spanning serine 314 to asparagine 372 is the AFP-like domain.

The enzyme catalyses aldehydo-N-acetyl-D-mannosamine 6-phosphate + phosphoenolpyruvate + H2O = N-acetylneuraminate 9-phosphate + phosphate. The catalysed reaction is aldehydo-D-mannose 6-phosphate + phosphoenolpyruvate + H2O = 3-deoxy-D-glycero-beta-D-galacto-non-2-ulopyranosonate 9-phosphate + phosphate. Its function is as follows. Catalyzes the condensation of phosphoenolpyruvate (PEP) and N-acetylmannosamine 6-phosphate (ManNAc-6-P) or D-mannose 6-phosphate (Man-6-P) to generate the phosphorylated forms of both the sialic acids N-acetylneuraminic acid (Neu5Ac) and deaminoneuraminic acid (KDN), respectively. Essential for biosynthesis of sialic acids in neurons of the central nervous system. The sequence is that of N-acetylneuraminate-9-phosphate synthase from Drosophila melanogaster (Fruit fly).